Here is a 526-residue protein sequence, read N- to C-terminus: Choline/ethanolamine transporter FLVCR2 (526 aa).

The disordered stretch occupies residues 1-70; sequence MVNEGPNQEE…PSGLAHPSSS (70 aa). The Cytoplasmic segment spans residues 1–76; sequence MVNEGPNQEE…PSSSGPEDLS (76 aa). A heme b-binding site is contributed by 1-84; sequence MVNEGPNQEE…LSVIKVSRRR (84 aa). Repeat copies occupy residues 25 to 30, 31 to 36, 37 to 42, 43 to 48, and 49 to 54. Over residues 25–56 the composition is skewed to low complexity; that stretch reads PSVSVHPSVSVHPSVSINPSVSVHPSSSAHPS. The tract at residues 25–72 is 8 X 6 AA tandem repeats of P-S-[VS]-S-[VIAG]-[HNP]; it reads PSVSVHPSVSVHPSVSINPSVSVHPSSSAHPSALAQPSGLAHPSSSGP. The stretch at 55–60 is one 6; approximate repeat; sequence PSALAQ. The 7; approximate repeat unit spans residues 61–66; that stretch reads PSGLAH. Residues 67–72 form repeat 8; the sequence is PSSSGP. A helical membrane pass occupies residues 77 to 101; that stretch reads VIKVSRRRWAVVLVFSCYSMCNSFQ. Residues asparagine 98 and tryptophan 102 each contribute to the choline site. Topologically, residues 102–119 are extracellular; the sequence is WIQYGSINNIFMHFYGVS. A helical transmembrane segment spans residues 120-147; that stretch reads AFAIDWLSMCYMLTYIPLLLPVAWLLEK. The Cytoplasmic portion of the chain corresponds to 148-149; sequence FG. A helical membrane pass occupies residues 150 to 169; the sequence is LRTIALTGSALNCLGAWVKL. Topologically, residues 170–176 are extracellular; sequence GSLKPHL. The chain crosses the membrane as a helical span at residues 177 to 205; it reads FPVTVVGQLICSVAQVFILGMPSRIASVW. 2 residues coordinate choline: glutamine 191 and leucine 195. Topologically, residues 206–210 are cytoplasmic; sequence FGANE. The helical transmembrane segment at 211–236 threads the bilayer; the sequence is VSTACSVAVFGNQLGIAIGFLVPPVL. Over 237-241 the chain is Extracellular; that stretch reads VPNIE. The helical transmembrane segment at 242-271 threads the bilayer; that stretch reads DRDELAYHISIMFYIIGGVATLLLILVIIV. At 272 to 307 the chain is on the cytoplasmic side; sequence FKEKPKYPPSRAQSLSYALTSPDASYLGSIARLFKN. The chain crosses the membrane as a helical span at residues 308–338; sequence LNFVLLVITYGLNAGAFYALSTLLNRMVIWH. Tyrosine 325 is a binding site for choline. At 339–342 the chain is on the extracellular side; the sequence is YPGE. Residues 343–371 traverse the membrane as a helical segment; that stretch reads EVNAGRIGLTIVIAGMLGAVISGIWLDRS. Over 372–373 the chain is Cytoplasmic; it reads KT. The chain crosses the membrane as a helical span at residues 374 to 396; that stretch reads YKETTLVVYIMTLVGMVVYTFTL. Residues 397–399 are Extracellular-facing; it reads NLG. A helical membrane pass occupies residues 400 to 429; it reads HLWVVFITAGTMGFFMTGYLPLGFEFAVEL. Over 430–437 the chain is Cytoplasmic; the sequence is TYPESEGI. A helical transmembrane segment spans residues 438–463; sequence SSGLLNISAQVFGIIFTISQGQIIDN. Choline is bound at residue glutamine 447. At 464 to 465 the chain is on the extracellular side; it reads YG. A helical transmembrane segment spans residues 466-488; sequence TKPGNIFLCVFLTLGAALTAFIK. The Cytoplasmic portion of the chain corresponds to 489–526; it reads ADLRRQKANKETLENKLQEEEEESNTSKVPTAVSEDHL. Residues 500-526 are disordered; it reads TLENKLQEEEEESNTSKVPTAVSEDHL. Phosphoserine is present on serine 515.

The protein belongs to the major facilitator superfamily. Feline leukemia virus subgroup C receptor (TC 2.A.1.28.1) family. Interacts with components of electron transfer chain complexes III, IV and V including CYC1, NDUFA4, COX4I1, ATP5PD and ATP5F1C; these interactions occur in the absence of heme and are disrupted upon heme binding. Interacts with ATP2A2; this interaction occurs in the absence of heme and promotes ATP2A2 proteasomal degradation; the complex is dissociated upon heme binding. Interacts with HMOX1; this interaction is potentiated in the presence of heme. In terms of tissue distribution, expressed in non-hematopoietic tissues, with relative abundant expression in brain, placenta, lung, liver and kidney. Also expressed in hematopoietic tissues (fetal liver, spleen, lymph node, thymus, leukocytes and bone marrow). Found in acidophil cells of the pituitary that secrete growth hormone and prolactin (at protein level).

Its subcellular location is the cell membrane. The protein resides in the mitochondrion membrane. The protein localises to the endoplasmic reticulum membrane. It catalyses the reaction choline(out) = choline(in). The enzyme catalyses ethanolamine(in) = ethanolamine(out). It carries out the reaction heme b(in) = heme b(out). Functionally, choline uniporter that specifically mediates choline uptake at the blood-brain-barrier. Responsible for the majority of choline uptake across the blood-brain-barrier from the circulation into the brain. Choline, a nutrient critical for brain development, is a precursor of phosphatidylcholine, as well as betaine. Also mediates transport of ethanolamine. Choline and ethanolamine transport is not coupled with proton transport and is exclusively driven by the choline gradient across the plasma membrane. However, the presence of an inwardly directed proton gradient enhances choline uptake. Also acts as a heme b transporter. Required to regulate mitochondrial respiration processes, ATP synthesis and thermogenesis. At low heme levels, interacts with components of electron transfer chain (ETC) complexes and ATP2A2, leading to ubiquitin-mediated degradation of ATP2A2 and inhibition of thermogenesis. Upon heme binding, dissociates from ETC complexes to allow switching from mitochondrial ATP synthesis to thermogenesis. The chain is Choline/ethanolamine transporter FLVCR2 from Homo sapiens (Human).